An 80-amino-acid polypeptide reads, in one-letter code: RNA-binding protein Hfq (80 aa).

The Sm domain occupies Asp10 to Val69.

The protein belongs to the Hfq family. Homohexamer.

Functionally, RNA chaperone that binds small regulatory RNA (sRNAs) and mRNAs to facilitate mRNA translational regulation in response to envelope stress, environmental stress and changes in metabolite concentrations. Also binds with high specificity to tRNAs. This is RNA-binding protein Hfq from Burkholderia ambifaria (strain ATCC BAA-244 / DSM 16087 / CCUG 44356 / LMG 19182 / AMMD) (Burkholderia cepacia (strain AMMD)).